We begin with the raw amino-acid sequence, 210 residues long: Ribosomal RNA large subunit methyltransferase E (210 aa).

Residues Gly67, Trp69, Asp87, Asp103, and Asp128 each coordinate S-adenosyl-L-methionine. Catalysis depends on Lys168, which acts as the Proton acceptor.

The protein belongs to the class I-like SAM-binding methyltransferase superfamily. RNA methyltransferase RlmE family.

Its subcellular location is the cytoplasm. The catalysed reaction is uridine(2552) in 23S rRNA + S-adenosyl-L-methionine = 2'-O-methyluridine(2552) in 23S rRNA + S-adenosyl-L-homocysteine + H(+). Its function is as follows. Specifically methylates the uridine in position 2552 of 23S rRNA at the 2'-O position of the ribose in the fully assembled 50S ribosomal subunit. The protein is Ribosomal RNA large subunit methyltransferase E of Psychrobacter arcticus (strain DSM 17307 / VKM B-2377 / 273-4).